Reading from the N-terminus, the 908-residue chain is Zinc finger CCCH domain-containing protein 41 (908 aa).

Positions 1 to 13 are enriched in polar residues; that stretch reads MELSVSSPKQSVL. The segment at 1 to 124 is disordered; sequence MELSVSSPKQ…GRGNYGSWAQ (124 aa). Residues 20 to 34 are compositionally biased toward acidic residues; it reads SDPEEEHEISEEEDD. Composition is skewed to polar residues over residues 48-59 and 90-105; these read SQSLEQDSSDQA and GQRV…SNPM. The C3H1-type zinc finger occupies 200–228; sequence GIPRQRCRDFEERGFCLRGDMCPMEHGMN. The disordered stretch occupies residues 333–375; sequence NVAPLDDSNQDAAENGCGIRDSRSTSQSVWGRMKGSNSQANSK. Positions 356–373 are enriched in polar residues; it reads STSQSVWGRMKGSNSQAN. The RRM domain maps to 438–510; it reads RTLFVNYVPH…RFIKLWWANR (73 aa). Disordered regions lie at residues 558–590, 629–695, and 807–908; these read PTFQ…LQQK, VVKR…KQRP, and RESN…QIHQ. Positions 559–588 are enriched in polar residues; that stretch reads TFQTGGAPSSSEQPKPVVVTTSGPKVTPLQ. Positions 587–630 form a coiled coil; that stretch reads LQQKKADTLERLKETLRKKQEMLEQKRNEYRKKLATLEKQGTVV. The segment covering 630-647 has biased composition (basic and acidic residues); that stretch reads VKREEADEPDAKRVKLDT. S657 carries the post-translational modification Phosphoserine. Polar residues predominate over residues 677 to 688; the sequence is AKLSTETPSPDS. A compositionally biased stretch (low complexity) spans 807-828; that stretch reads RESNNNNNNSNSLSVSRDNLSS. Residues 846-863 are compositionally biased toward polar residues; the sequence is KTSSTEEPENTNVSGDND. Positions 865–886 are enriched in basic and acidic residues; the sequence is TLDKQETKESDNDNNKSNHESI. Residues 898 to 908 show a composition bias toward acidic residues; sequence TDEEQSEQIHQ.

The chain is Zinc finger CCCH domain-containing protein 41 from Arabidopsis thaliana (Mouse-ear cress).